A 314-amino-acid chain; its full sequence is 3'-5' exoribonuclease YhaM (314 aa).

The HD domain maps to His-163 to Lys-279.

The protein belongs to the YhaM family.

Its function is as follows. Shows a 3'-5' exoribonuclease activity. The sequence is that of 3'-5' exoribonuclease YhaM from Bacillus velezensis (strain DSM 23117 / BGSC 10A6 / LMG 26770 / FZB42) (Bacillus amyloliquefaciens subsp. plantarum).